Here is a 470-residue protein sequence, read N- to C-terminus: Methylenetetrahydrofolate--tRNA-(uracil-5-)-methyltransferase TrmFO (470 aa).

Residue 10–15 (GAGLAG) coordinates FAD.

Belongs to the MnmG family. TrmFO subfamily. FAD serves as cofactor.

Its subcellular location is the cytoplasm. The catalysed reaction is uridine(54) in tRNA + (6R)-5,10-methylene-5,6,7,8-tetrahydrofolate + NADH + H(+) = 5-methyluridine(54) in tRNA + (6S)-5,6,7,8-tetrahydrofolate + NAD(+). It catalyses the reaction uridine(54) in tRNA + (6R)-5,10-methylene-5,6,7,8-tetrahydrofolate + NADPH + H(+) = 5-methyluridine(54) in tRNA + (6S)-5,6,7,8-tetrahydrofolate + NADP(+). Its function is as follows. Catalyzes the folate-dependent formation of 5-methyl-uridine at position 54 (M-5-U54) in all tRNAs. This Prochlorococcus marinus (strain MIT 9301) protein is Methylenetetrahydrofolate--tRNA-(uracil-5-)-methyltransferase TrmFO.